A 181-amino-acid chain; its full sequence is MEGQRTQRRGYLKDKATVSNLVEEEMENGMDGEEEDGGDEDKRKKVMERVRGPSTDRVPSRLCQVDRCTVNLTEAKQYYRRHRVCEVHAKASAATVAGVRQRFCQQCSRFHELPEFDEAKRSCRRRLAGHNERRRKISGDSFGEGSGRRGFSGQLIQTQERNRVDRKLPMTNSSFKRPQIR.

Basic residues predominate over residues 1–10; that stretch reads MEGQRTQRRG. Positions 1-58 are disordered; sequence MEGQRTQRRGYLKDKATVSNLVEEEMENGMDGEEEDGGDEDKRKKVMERVRGPSTDRV. Residues 22 to 39 show a composition bias toward acidic residues; that stretch reads VEEEMENGMDGEEEDGGD. Basic and acidic residues predominate over residues 40 to 51; that stretch reads EDKRKKVMERVR. The SBP-type zinc finger occupies 60–137; sequence SRLCQVDRCT…AGHNERRRKI (78 aa). The Zn(2+) site is built by Cys63, Cys68, Cys85, His88, Cys104, Cys107, His111, and Cys123. The Bipartite nuclear localization signal motif lies at 120 to 136; it reads KRSCRRRLAGHNERRRK. The interval 128-181 is disordered; the sequence is AGHNERRRKISGDSFGEGSGRRGFSGQLIQTQERNRVDRKLPMTNSSFKRPQIR. Residues 170 to 181 show a composition bias toward polar residues; sequence MTNSSFKRPQIR.

The cofactor is Zn(2+). Expressed in the inflorescence apical meristem and young flowers.

The protein localises to the nucleus. It localises to the cytoplasm. Its function is as follows. Trans-acting factor that binds specifically to the consensus nucleotide sequence 5'-TNCGTACAA-3' of AP1 promoter. Promotes both vegetative phase change and flowering. The polypeptide is Squamosa promoter-binding-like protein 5 (SPL5) (Arabidopsis thaliana (Mouse-ear cress)).